A 129-amino-acid polypeptide reads, in one-letter code: Small ribosomal subunit protein uS9 (129 aa).

The interval valine 110–arginine 129 is disordered. A compositionally biased stretch (basic residues) spans lysine 114–arginine 129.

It belongs to the universal ribosomal protein uS9 family.

The protein is Small ribosomal subunit protein uS9 of Chlorobaculum parvum (strain DSM 263 / NCIMB 8327) (Chlorobium vibrioforme subsp. thiosulfatophilum).